The primary structure comprises 232 residues: Chaperone protein LpfB (232 aa).

The signal sequence occupies residues 1-23 (MNRSRLISCTALVLALIAQNSFA).

This sequence belongs to the periplasmic pilus chaperone family.

It localises to the periplasm. In terms of biological role, required for the biogenesis of long polar fimbria; binds and interact with LpfA. The polypeptide is Chaperone protein LpfB (lpfB) (Salmonella typhimurium (strain LT2 / SGSC1412 / ATCC 700720)).